The chain runs to 87 residues: Putative autophagy-related protein 8E (87 aa).

The segment covering 1 to 14 has biased composition (basic and acidic residues); the sequence is MEERRKEKGKEGRR. The segment at 1 to 30 is disordered; the sequence is MEERRKEKGKEGRRGKATGHSVDKFSRSNL. Gly87 carries Phosphatidylethanolamine amidated glycine lipidation.

This sequence belongs to the ATG8 family. As to quaternary structure, interacts with ATG4. The C-terminal Gly is amidated with phosphatidylethanolamine by an activating system similar to that for ubiquitin.

It localises to the cytoplasmic vesicle. It is found in the autophagosome membrane. The protein localises to the vacuole membrane. The protein resides in the cytoplasm. Its subcellular location is the cytoskeleton. In terms of biological role, ubiquitin-like modifier involved in autophagosomes formation. May mediate the delivery of the autophagosomes to the vacuole via the microtubule cytoskeleton. This is Putative autophagy-related protein 8E (ATG8E) from Oryza sativa subsp. japonica (Rice).